Reading from the N-terminus, the 422-residue chain is GTPase Obg (422 aa).

An Obg domain is found at 1–156 (MKFIDEVNVL…FALRLVLKVL (156 aa)). Residues 157–324 (ADVGLVGKPS…LKAAIFKMLE (168 aa)) form the OBG-type G domain. Residues 163 to 170 (GKPSAGKS), 188 to 192 (FTTLV), 209 to 212 (DLPG), 278 to 281 (NKSD), and 305 to 307 (SAL) contribute to the GTP site. Positions 170 and 190 each coordinate Mg(2+). In terms of domain architecture, OCT spans 342–420 (NITLDRDALK…IGNFEFDWSD (79 aa)).

This sequence belongs to the TRAFAC class OBG-HflX-like GTPase superfamily. OBG GTPase family. As to quaternary structure, monomer. Mg(2+) serves as cofactor.

The protein localises to the cytoplasm. In terms of biological role, an essential GTPase which binds GTP, GDP and possibly (p)ppGpp with moderate affinity, with high nucleotide exchange rates and a fairly low GTP hydrolysis rate. Plays a role in control of the cell cycle, stress response, ribosome biogenesis and in those bacteria that undergo differentiation, in morphogenesis control. The chain is GTPase Obg from Metamycoplasma arthritidis (strain 158L3-1) (Mycoplasma arthritidis).